Consider the following 178-residue polypeptide: MSVRKILRMGDPILRKISEPVTEDEIQTKEFKKLIRDMFDTMRHAEGVGLAAPQIGILKQIVVVGSEDNERYPGTPDVPERIILNPVITPLTKDTSGFWEGCLSVPGMRGYVERPNQIRMQWMDEKGNQFDETIDGYKAIVYQHECDHLQGILYVDRLKDTKLFGFNETLDSSHNVLD.

Fe cation is bound by residues C102 and H144. E145 is an active-site residue. Position 148 (H148) interacts with Fe cation.

The protein belongs to the polypeptide deformylase family. Fe(2+) serves as cofactor.

The enzyme catalyses N-terminal N-formyl-L-methionyl-[peptide] + H2O = N-terminal L-methionyl-[peptide] + formate. Its function is as follows. Removes the formyl group from the N-terminal Met of newly synthesized proteins. Requires at least a dipeptide for an efficient rate of reaction. N-terminal L-methionine is a prerequisite for activity but the enzyme has broad specificity at other positions. This is Peptide deformylase from Leptospira interrogans serogroup Icterohaemorrhagiae serovar copenhageni (strain Fiocruz L1-130).